A 334-amino-acid polypeptide reads, in one-letter code: Isocitrate/homoisocitrate dehydrogenase (334 aa).

70–72 (ATS) serves as a coordination point for NADH. Residues S72, R85, R88, R98, R118, Y125, K171, and N173 each coordinate (2R,3S)-homoisocitrate. N173 contacts NADH. Residues D204, D228, and D232 each contribute to the Mg(2+) site. NADH contacts are provided by residues 261-265 (GSAPD) and N273.

The protein belongs to the isocitrate and isopropylmalate dehydrogenases family. As to quaternary structure, homotetramer. Dimer of dimers. The homotetramer can transiently dissociate into homodimers. The cofactor is Mg(2+).

The catalysed reaction is (2R,3S)-homoisocitrate + NAD(+) = 2-oxoadipate + CO2 + NADH. The enzyme catalyses D-threo-isocitrate + NAD(+) = 2-oxoglutarate + CO2 + NADH. Its pathway is amino-acid biosynthesis; L-lysine biosynthesis via AAA pathway; L-alpha-aminoadipate from 2-oxoglutarate: step 4/5. Its function is as follows. Catalyzes the NAD(+)-dependent oxidative decarboxylation of homoisocitrate to 2-oxoadipate (alpha-ketoadipate), a reaction involved in lysine biosynthesis through the alpha-aminoadipate pathway. In addition, has high activity with isocitrate, but is inactive with 3-isopropylmalate. This is Isocitrate/homoisocitrate dehydrogenase (hicd) from Thermus thermophilus (strain ATCC BAA-163 / DSM 7039 / HB27).